A 211-amino-acid polypeptide reads, in one-letter code: Small ribosomal subunit protein uS3 (211 aa).

The KH type-2 domain maps to 16–85 (IDEYFKTKLV…NPQIEVKQVE (70 aa)).

Belongs to the universal ribosomal protein uS3 family. As to quaternary structure, part of the 30S ribosomal subunit.

Binds the lower part of the 30S subunit head. In Methanococcus maripaludis (strain C7 / ATCC BAA-1331), this protein is Small ribosomal subunit protein uS3.